A 1193-amino-acid chain; its full sequence is DNA-directed RNA polymerase subunit beta (1193 aa).

The tract at residues 1173–1193 (QQAKEAAELEKAKEEALDKTE) is disordered. Basic and acidic residues predominate over residues 1177-1193 (EAAELEKAKEEALDKTE).

It belongs to the RNA polymerase beta chain family. The RNAP catalytic core consists of 2 alpha, 1 beta, 1 beta' and 1 omega subunit. When a sigma factor is associated with the core the holoenzyme is formed, which can initiate transcription.

The enzyme catalyses RNA(n) + a ribonucleoside 5'-triphosphate = RNA(n+1) + diphosphate. Its function is as follows. DNA-dependent RNA polymerase catalyzes the transcription of DNA into RNA using the four ribonucleoside triphosphates as substrates. The protein is DNA-directed RNA polymerase subunit beta of Streptococcus thermophilus (strain CNRZ 1066).